The primary structure comprises 714 residues: Glutamine-dependent NAD(+) synthetase (714 aa).

Residues 5–275 (ITLATCNLNQ…VEVVTATVDL (271 aa)) enclose the CN hydrolase domain. Glu-45 functions as the Proton acceptor; for glutaminase activity in the catalytic mechanism. The active-site For glutaminase activity is Lys-114. The active-site Nucleophile; for glutaminase activity is the Cys-175. Residues 329–714 (YHSPEEEIAL…GSTLDIMSID (386 aa)) are ligase. Residue 359 to 366 (PLSGGIDS) participates in ATP binding. Ser-361 is a catalytic residue.

It in the C-terminal section; belongs to the NAD synthetase family.

It carries out the reaction deamido-NAD(+) + L-glutamine + ATP + H2O = L-glutamate + AMP + diphosphate + NAD(+) + H(+). The protein operates within cofactor biosynthesis; NAD(+) biosynthesis; NAD(+) from deamido-NAD(+) (L-Gln route): step 1/1. This Saccharomyces cerevisiae (strain ATCC 204508 / S288c) (Baker's yeast) protein is Glutamine-dependent NAD(+) synthetase (QNS1).